We begin with the raw amino-acid sequence, 567 residues long: Proline--tRNA ligase (567 aa).

The protein belongs to the class-II aminoacyl-tRNA synthetase family. ProS type 1 subfamily. As to quaternary structure, homodimer.

It localises to the cytoplasm. The catalysed reaction is tRNA(Pro) + L-proline + ATP = L-prolyl-tRNA(Pro) + AMP + diphosphate. Functionally, catalyzes the attachment of proline to tRNA(Pro) in a two-step reaction: proline is first activated by ATP to form Pro-AMP and then transferred to the acceptor end of tRNA(Pro). As ProRS can inadvertently accommodate and process non-cognate amino acids such as alanine and cysteine, to avoid such errors it has two additional distinct editing activities against alanine. One activity is designated as 'pretransfer' editing and involves the tRNA(Pro)-independent hydrolysis of activated Ala-AMP. The other activity is designated 'posttransfer' editing and involves deacylation of mischarged Ala-tRNA(Pro). The misacylated Cys-tRNA(Pro) is not edited by ProRS. The sequence is that of Proline--tRNA ligase from Campylobacter fetus subsp. fetus (strain 82-40).